A 276-amino-acid polypeptide reads, in one-letter code: Large ribosomal subunit protein uL2 (276 aa).

The tract at residues 224–254 (VMNPVDHPHGGGEGRTSGGRHPVTPWGVPTK) is disordered.

The protein belongs to the universal ribosomal protein uL2 family. Part of the 50S ribosomal subunit. Forms a bridge to the 30S subunit in the 70S ribosome.

One of the primary rRNA binding proteins. Required for association of the 30S and 50S subunits to form the 70S ribosome, for tRNA binding and peptide bond formation. It has been suggested to have peptidyltransferase activity; this is somewhat controversial. Makes several contacts with the 16S rRNA in the 70S ribosome. The sequence is that of Large ribosomal subunit protein uL2 from Gluconobacter oxydans (strain 621H) (Gluconobacter suboxydans).